The primary structure comprises 677 residues: Threonine--tRNA ligase (677 aa).

A TGS domain is found at 1-59; that stretch reads MAQATISITVNGEAKEVEATTTGVELFAEDKNIIAVKINGENRDLYTPLNDGDTVDPIA. A catalytic region spans residues 255–561; it reads DHRKLGAEMD…LLEHYAGAFP (307 aa). Positions 360, 411, and 538 each coordinate Zn(2+).

The protein belongs to the class-II aminoacyl-tRNA synthetase family. In terms of assembly, homodimer. The cofactor is Zn(2+).

The protein localises to the cytoplasm. It catalyses the reaction tRNA(Thr) + L-threonine + ATP = L-threonyl-tRNA(Thr) + AMP + diphosphate + H(+). Catalyzes the attachment of threonine to tRNA(Thr) in a two-step reaction: L-threonine is first activated by ATP to form Thr-AMP and then transferred to the acceptor end of tRNA(Thr). Also edits incorrectly charged L-seryl-tRNA(Thr). The sequence is that of Threonine--tRNA ligase from Bifidobacterium longum (strain NCC 2705).